The chain runs to 201 residues: MLLMIDNYDSFTYNLVQYFGELKAEVKVVRNDELSVEQIEALAPERIVLSPGPCTPNEAGVSLAVIERFAGKLPLLGVCLGHQSIGQAFGGEVVRARQVMHGKTSPIHHKDLGVFAGLANPLTVTRYHSLVVKRESLPECLEVTAWTQHADGSLDEIMGVRHKTLNVEGVQFHPESILTEQGHELLANFLRQQGGVRGEGN.

In terms of domain architecture, Glutamine amidotransferase type-1 spans 1 to 199; the sequence is MLLMIDNYDS…LRQQGGVRGE (199 aa). L-glutamine is bound at residue 52–54; that stretch reads GPC. Residue Cys79 is the Nucleophile; for GATase activity of the active site. L-glutamine is bound by residues Gln83 and 129-130; that span reads SL. Residues His173 and Glu175 each act as for GATase activity in the active site.

Heterotetramer consisting of two non-identical subunits: a beta subunit (TrpG) and a large alpha subunit (TrpE).

It catalyses the reaction chorismate + L-glutamine = anthranilate + pyruvate + L-glutamate + H(+). It functions in the pathway amino-acid biosynthesis; L-tryptophan biosynthesis; L-tryptophan from chorismate: step 1/5. Its function is as follows. Part of a heterotetrameric complex that catalyzes the two-step biosynthesis of anthranilate, an intermediate in the biosynthesis of L-tryptophan. In the first step, the glutamine-binding beta subunit (TrpG) of anthranilate synthase (AS) provides the glutamine amidotransferase activity which generates ammonia as a substrate that, along with chorismate, is used in the second step, catalyzed by the large alpha subunit of AS (TrpE) to produce anthranilate. In the absence of TrpG, TrpE can synthesize anthranilate directly from chorismate and high concentrations of ammonia. In Pseudomonas aeruginosa (strain ATCC 15692 / DSM 22644 / CIP 104116 / JCM 14847 / LMG 12228 / 1C / PRS 101 / PAO1), this protein is Anthranilate synthase component 2.